We begin with the raw amino-acid sequence, 245 residues long: Acetoacetate decarboxylase (245 aa).

Residue Lys116 is the Schiff-base intermediate with acetoacetate of the active site.

This sequence belongs to the ADC family.

It catalyses the reaction acetoacetate + H(+) = acetone + CO2. In terms of biological role, catalyzes the conversion of acetoacetate to acetone and carbon dioxide. In Acidiphilium cryptum (strain JF-5), this protein is Acetoacetate decarboxylase.